We begin with the raw amino-acid sequence, 30 residues long: Photosystem I reaction center subunit XII (30 aa).

A helical membrane pass occupies residues 7 to 26; sequence IMVALFAALFTGILALRLGT.

Belongs to the PsaM family.

The protein localises to the plastid. Its subcellular location is the chloroplast thylakoid membrane. This is Photosystem I reaction center subunit XII from Mesostigma viride (Green alga).